Consider the following 453-residue polypeptide: Probable phenylalanine--tRNA ligase, mitochondrial (453 aa).

Residues 1 to 27 (MLLTLRVQGARHWLKSTRCLASSAAPA) constitute a mitochondrion transit peptide. Substrate-binding positions include 142-145 (TAHQ), arginine 164, 171-173 (THY), 178-180 (QAD), glutamate 285, and phenylalanine 310. The region spanning 356–453 (SHYPQCTNDL…SVDSFNVQIR (98 aa)) is the FDX-ACB domain.

Belongs to the class-II aminoacyl-tRNA synthetase family.

The protein resides in the mitochondrion matrix. It carries out the reaction tRNA(Phe) + L-phenylalanine + ATP = L-phenylalanyl-tRNA(Phe) + AMP + diphosphate + H(+). Its function is as follows. Is responsible for the charging of tRNA(Phe) with phenylalanine in mitochondrial translation. The polypeptide is Probable phenylalanine--tRNA ligase, mitochondrial (Drosophila melanogaster (Fruit fly)).